The chain runs to 159 residues: uncharacterized protein (159 aa).

Transmembrane regions (helical) follow at residues 17–37 (ALFI…TILV) and 40–60 (LLQF…FKKY).

Its subcellular location is the cell membrane. This is an uncharacterized protein from Borreliella burgdorferi (strain ATCC 35210 / DSM 4680 / CIP 102532 / B31) (Borrelia burgdorferi).